The primary structure comprises 415 residues: Histidine--tRNA ligase (415 aa).

This sequence belongs to the class-II aminoacyl-tRNA synthetase family. Homodimer.

Its subcellular location is the cytoplasm. It carries out the reaction tRNA(His) + L-histidine + ATP = L-histidyl-tRNA(His) + AMP + diphosphate + H(+). The polypeptide is Histidine--tRNA ligase (Gluconobacter oxydans (strain 621H) (Gluconobacter suboxydans)).